The primary structure comprises 736 residues: Prolyl oligopeptidase dbiP (736 aa).

Active-site charge relay system residues include serine 572, aspartate 656, and histidine 692.

The protein belongs to the peptidase S9A family. As to quaternary structure, monomer.

It catalyses the reaction Hydrolysis of Pro-|-Xaa &gt;&gt; Ala-|-Xaa in oligopeptides.. It participates in mycotoxin biosynthesis. Functionally, prolyl oligopeptidase; part of the gene cluster that mediates the biosynthesis of dendrothelin A, a highly methylated cyclic dodecapeptide showing slight nematodicidal activity. Excises and catalyzes the macrocyclization of the methylated core peptide of dbiMA to yield dendrothelin A. DbiP works in a two-step fashion with an initial cleavage at the N-terminus, followed by a second cleavage at the C-terminus of the core peptide. According to this mechanism, the free N-terminus of the core peptide, generated by the first cleavage, attacks the covalent intermediate of the second cleavage, which results in macrocyclization of the core peptide. The chain is Prolyl oligopeptidase dbiP from Dendrothele bispora (strain CBS 962.96).